The sequence spans 129 residues: Glycine cleavage system H protein (129 aa).

A Lipoyl-binding domain is found at 23–105; it reads SAVVGITEHA…YGEGWLAKFS (83 aa). Position 64 is an N6-lipoyllysine (K64).

Belongs to the GcvH family. The glycine cleavage system is composed of four proteins: P, T, L and H. (R)-lipoate serves as cofactor.

Its function is as follows. The glycine cleavage system catalyzes the degradation of glycine. The H protein shuttles the methylamine group of glycine from the P protein to the T protein. In Herpetosiphon aurantiacus (strain ATCC 23779 / DSM 785 / 114-95), this protein is Glycine cleavage system H protein.